The sequence spans 310 residues: Methionyl-tRNA formyltransferase (310 aa).

110-113 (SLLP) contributes to the (6S)-5,6,7,8-tetrahydrofolate binding site.

The protein belongs to the Fmt family.

It catalyses the reaction L-methionyl-tRNA(fMet) + (6R)-10-formyltetrahydrofolate = N-formyl-L-methionyl-tRNA(fMet) + (6S)-5,6,7,8-tetrahydrofolate + H(+). Functionally, attaches a formyl group to the free amino group of methionyl-tRNA(fMet). The formyl group appears to play a dual role in the initiator identity of N-formylmethionyl-tRNA by promoting its recognition by IF2 and preventing the misappropriation of this tRNA by the elongation apparatus. This chain is Methionyl-tRNA formyltransferase, found in Streptomyces griseus subsp. griseus (strain JCM 4626 / CBS 651.72 / NBRC 13350 / KCC S-0626 / ISP 5235).